Here is a 640-residue protein sequence, read N- to C-terminus: 1,4-alpha-glucan branching enzyme GlgB (640 aa).

Aspartate 318 acts as the Nucleophile in catalysis. Glutamate 371 acts as the Proton donor in catalysis.

This sequence belongs to the glycosyl hydrolase 13 family. GlgB subfamily. In terms of assembly, monomer.

The enzyme catalyses Transfers a segment of a (1-&gt;4)-alpha-D-glucan chain to a primary hydroxy group in a similar glucan chain.. Its pathway is glycan biosynthesis; glycogen biosynthesis. In terms of biological role, catalyzes the formation of the alpha-1,6-glucosidic linkages in glycogen by scission of a 1,4-alpha-linked oligosaccharide from growing alpha-1,4-glucan chains and the subsequent attachment of the oligosaccharide to the alpha-1,6 position. The sequence is that of 1,4-alpha-glucan branching enzyme GlgB from Francisella philomiragia subsp. philomiragia (strain ATCC 25017 / CCUG 19701 / FSC 153 / O#319-036).